We begin with the raw amino-acid sequence, 366 residues long: Ribosomal RNA large subunit methyltransferase M (366 aa).

S-adenosyl-L-methionine contacts are provided by residues serine 188, 221–224, aspartate 240, aspartate 260, and aspartate 277; that span reads CPGG. Residue lysine 306 is the Proton acceptor of the active site.

Belongs to the class I-like SAM-binding methyltransferase superfamily. RNA methyltransferase RlmE family. RlmM subfamily. As to quaternary structure, monomer.

The protein localises to the cytoplasm. The catalysed reaction is cytidine(2498) in 23S rRNA + S-adenosyl-L-methionine = 2'-O-methylcytidine(2498) in 23S rRNA + S-adenosyl-L-homocysteine + H(+). Its function is as follows. Catalyzes the 2'-O-methylation at nucleotide C2498 in 23S rRNA. The sequence is that of Ribosomal RNA large subunit methyltransferase M from Klebsiella pneumoniae subsp. pneumoniae (strain ATCC 700721 / MGH 78578).